A 351-amino-acid chain; its full sequence is L-threonine 3-dehydrogenase (351 aa).

A Zn(2+)-binding site is contributed by Cys39. Catalysis depends on charge relay system residues Thr41 and His44. Zn(2+) contacts are provided by His64, Glu65, Cys94, Cys97, Cys100, and Cys108. Residues Ile176, Asp196, Arg201, 271–273, and 295–296 contribute to the NAD(+) site; these read LGI and IY.

The protein belongs to the zinc-containing alcohol dehydrogenase family. Homotetramer. Zn(2+) serves as cofactor.

The protein localises to the cytoplasm. It catalyses the reaction L-threonine + NAD(+) = (2S)-2-amino-3-oxobutanoate + NADH + H(+). Its pathway is amino-acid degradation; L-threonine degradation via oxydo-reductase pathway; glycine from L-threonine: step 1/2. Functionally, catalyzes the NAD(+)-dependent oxidation of L-threonine to 2-amino-3-ketobutyrate. The polypeptide is L-threonine 3-dehydrogenase (Francisella philomiragia subsp. philomiragia (strain ATCC 25017 / CCUG 19701 / FSC 153 / O#319-036)).